A 609-amino-acid polypeptide reads, in one-letter code: DNA-directed RNA polymerase subunit beta' (609 aa).

Residues Cys67, Cys69, Cys82, and Cys85 each contribute to the Zn(2+) site. Mg(2+)-binding residues include Asp460, Asp462, and Asp464.

This sequence belongs to the RNA polymerase beta' chain family. RpoC1 subfamily. In terms of assembly, in plastids the minimal PEP RNA polymerase catalytic core is composed of four subunits: alpha, beta, beta', and beta''. When a (nuclear-encoded) sigma factor is associated with the core the holoenzyme is formed, which can initiate transcription. The cofactor is Mg(2+). Zn(2+) serves as cofactor.

It localises to the plastid. Its subcellular location is the chloroplast. It carries out the reaction RNA(n) + a ribonucleoside 5'-triphosphate = RNA(n+1) + diphosphate. Functionally, DNA-dependent RNA polymerase catalyzes the transcription of DNA into RNA using the four ribonucleoside triphosphates as substrates. The chain is DNA-directed RNA polymerase subunit beta' from Emiliania huxleyi (Coccolithophore).